Here is a 160-residue protein sequence, read N- to C-terminus: Large ribosomal subunit protein uL22c (160 aa).

This sequence belongs to the universal ribosomal protein uL22 family. Part of the 50S ribosomal subunit.

Its subcellular location is the plastid. The protein resides in the chloroplast. In terms of biological role, this protein binds specifically to 23S rRNA. The globular domain of the protein is located near the polypeptide exit tunnel on the outside of the subunit, while an extended beta-hairpin is found that lines the wall of the exit tunnel in the center of the 70S ribosome. This chain is Large ribosomal subunit protein uL22c (rpl22), found in Nasturtium officinale (Watercress).